The chain runs to 228 residues: UPF0758 protein str1465 (228 aa).

Residues 103 to 225 (QIMSSQQVAR…YYSFREERED (123 aa)) form the MPN domain. Positions 174, 176, and 187 each coordinate Zn(2+). A JAMM motif motif is present at residues 174–187 (HNHPSGEAYPSRND).

The protein belongs to the UPF0758 family.

The sequence is that of UPF0758 protein str1465 from Streptococcus thermophilus (strain CNRZ 1066).